Reading from the N-terminus, the 215-residue chain is Ribose-5-phosphate isomerase A (215 aa).

Residues 26–29 (TGST), 79–82 (DGAD), and 92–95 (KGGG) each bind substrate. Glutamate 101 serves as the catalytic Proton acceptor. Residue lysine 119 coordinates substrate.

Belongs to the ribose 5-phosphate isomerase family. In terms of assembly, homodimer.

It carries out the reaction aldehydo-D-ribose 5-phosphate = D-ribulose 5-phosphate. Its pathway is carbohydrate degradation; pentose phosphate pathway; D-ribose 5-phosphate from D-ribulose 5-phosphate (non-oxidative stage): step 1/1. In terms of biological role, catalyzes the reversible conversion of ribose-5-phosphate to ribulose 5-phosphate. The sequence is that of Ribose-5-phosphate isomerase A from Xanthomonas euvesicatoria pv. vesicatoria (strain 85-10) (Xanthomonas campestris pv. vesicatoria).